Here is a 221-residue protein sequence, read N- to C-terminus: Protein-L-isoaspartate O-methyltransferase (221 aa).

Ser64 is a catalytic residue.

The protein belongs to the methyltransferase superfamily. L-isoaspartyl/D-aspartyl protein methyltransferase family.

The protein resides in the cytoplasm. It catalyses the reaction [protein]-L-isoaspartate + S-adenosyl-L-methionine = [protein]-L-isoaspartate alpha-methyl ester + S-adenosyl-L-homocysteine. Catalyzes the methyl esterification of L-isoaspartyl residues in peptides and proteins that result from spontaneous decomposition of normal L-aspartyl and L-asparaginyl residues. It plays a role in the repair and/or degradation of damaged proteins. In Cytophaga hutchinsonii (strain ATCC 33406 / DSM 1761 / CIP 103989 / NBRC 15051 / NCIMB 9469 / D465), this protein is Protein-L-isoaspartate O-methyltransferase.